The primary structure comprises 719 residues: Protein ENHANCED DISEASE RESISTANCE 2-like (719 aa).

A PH domain is found at 3–110; that stretch reads KVVYEGWMVR…WKEKIECVID (108 aa). Positions 134-173 are disordered; sequence AGRTASSSDHESPFSALEDENDSQRDLLRRTTIGNGPPES. An START domain is found at 180-392; that stretch reads EFDAELSNQS…VSGLREWFSQ (213 aa). Residues 414-478 form a disordered region; the sequence is ALGKGGKHHH…ETDAKKTEEP (65 aa). The segment covering 426 to 439 has biased composition (polar residues); the sequence is SLSIDQTNGASRNS. Over residues 442–461 the composition is skewed to acidic residues; it reads MDEDSDDDDEFQIPDSEPEP. Residues 462–477 show a composition bias toward basic and acidic residues; that stretch reads ETSKQDQETDAKKTEE. A helical transmembrane segment spans residues 665-685; it reads GVLGLVIGVITSLVVEMAFLV.

It localises to the endoplasmic reticulum membrane. The protein resides in the cell membrane. It is found in the endosome membrane. Functionally, binds to phosphatidylinositol-4-phosphate (PtdIns(4)P). May regulate the salicylic acid- (SA-) mediated resistance to pathogens. The chain is Protein ENHANCED DISEASE RESISTANCE 2-like (EDR2L) from Arabidopsis thaliana (Mouse-ear cress).